Here is a 688-residue protein sequence, read N- to C-terminus: GTPase IMAP family member 8 (688 aa).

The interval 22–44 (TSIGQGERPRASRGQESNFKQSQ) is disordered. The span at 35–44 (GQESNFKQSQ) shows a compositional bias: polar residues. AIG1-type G domains are found at residues 46 to 246 (TSTL…TENS), 281 to 471 (TPEL…VIRE), and 472 to 681 (KELL…SAVG). A G1 region spans residues 55-62 (GKQGAGKS). GTP contacts are provided by residues 55–63 (GKQGAGKSA) and Ser76. Residues 82 to 86 (MVTKR) are G2. Residues 103–106 (DTPD) form a G3 region. Residues 171–174 (TRED) form a G4 region. GTP contacts are provided by residues 172-174 (RED) and Asn208. The interval 207-209 (NNK) is G5.

It belongs to the TRAFAC class TrmE-Era-EngA-EngB-Septin-like GTPase superfamily. AIG1/Toc34/Toc159-like paraseptin GTPase family. IAN subfamily. In terms of tissue distribution, spleen, thymus and T-cells. Greatly reduced in T-cells from lymphopenic rats.

Its subcellular location is the endoplasmic reticulum. It localises to the golgi apparatus. The protein resides in the mitochondrion. The protein localises to the cytoplasm. It is found in the cytosol. Its function is as follows. Exerts an anti-apoptotic effect in the immune system and is involved in responses to infections. The chain is GTPase IMAP family member 8 (Gimap8) from Rattus norvegicus (Rat).